The primary structure comprises 372 residues: Pyrimidine monooxygenase RutA (372 aa).

Residues 57–58 (IK), Asn-123, Glu-132, 148–149 (RY), and Ser-198 contribute to the FMN site.

The protein belongs to the NtaA/SnaA/DszA monooxygenase family. RutA subfamily.

The catalysed reaction is uracil + FMNH2 + NADH + O2 = (Z)-3-ureidoacrylate + FMN + NAD(+) + H2O + H(+). It catalyses the reaction thymine + FMNH2 + NADH + O2 = (Z)-2-methylureidoacrylate + FMN + NAD(+) + H2O + H(+). Its function is as follows. Catalyzes the pyrimidine ring opening between N-3 and C-4 by an unusual flavin hydroperoxide-catalyzed mechanism, adding oxygen atoms in the process to yield ureidoacrylate peracid, that immediately reacts with FMN forming ureidoacrylate and FMN-N(5)-oxide. The FMN-N(5)-oxide reacts spontaneously with NADH to produce FMN. Requires the flavin reductase RutF to regenerate FMN in vivo. In Methylorubrum extorquens (strain PA1) (Methylobacterium extorquens), this protein is Pyrimidine monooxygenase RutA.